Here is a 168-residue protein sequence, read N- to C-terminus: Peptidoglycan-associated lipoprotein (168 aa).

A signal peptide spans 1–21; sequence MEMLKFGKFAALALAMAVAVG. Cys22 is lipidated: N-palmitoyl cysteine. The S-diacylglycerol cysteine moiety is linked to residue Cys22. One can recognise an OmpA-like domain in the interval 56–168; the sequence is SDEAALRAIT…AQNRRVELKK (113 aa). The disordered stretch occupies residues 147-168; the sequence is RPVATGHDEQSWAQNRRVELKK.

This sequence belongs to the Pal lipoprotein family. The Tol-Pal system is composed of five core proteins: the inner membrane proteins TolA, TolQ and TolR, the periplasmic protein TolB and the outer membrane protein Pal. They form a network linking the inner and outer membranes and the peptidoglycan layer.

The protein localises to the cell outer membrane. Part of the Tol-Pal system, which plays a role in outer membrane invagination during cell division and is important for maintaining outer membrane integrity. This Pseudomonas aeruginosa (strain ATCC 15692 / DSM 22644 / CIP 104116 / JCM 14847 / LMG 12228 / 1C / PRS 101 / PAO1) protein is Peptidoglycan-associated lipoprotein.